A 253-amino-acid polypeptide reads, in one-letter code: Peptidase inhibitor R3HDML (253 aa).

A signal peptide spans 1-23; sequence MPLLSSIVGLTGLLLWMGHTVGA. The propeptide occupies 24-56; the sequence is LRMPNTTLVQGRPKNTAVWPLSGLGVPRHRRKR. N28 and N120 each carry an N-linked (GlcNAc...) asparagine glycan. Residues 67–207 enclose the SCP domain; that stretch reads LDYHNHIRAS…QQAVYLVCNY (141 aa).

The protein belongs to the CRISP family.

It localises to the secreted. In terms of biological role, putative serine protease inhibitor. The polypeptide is Peptidase inhibitor R3HDML (R3hdml) (Mus musculus (Mouse)).